The sequence spans 123 residues: Methicillin resistance regulatory protein MecI (123 aa).

The H-T-H motif DNA-binding region spans 7–71 (EISSAEWEFM…KDNKIFQYYS (65 aa)). Positions 74 to 123 (EESDIKYKTSKNFINKVYKGGFNSLVLNFVEKEDLSQDEIEELRNILNKK) are important for dimerization.

This sequence belongs to the BlaI transcriptional regulatory family. Monomer and homodimer. Upon exposure to beta-lactams, proteolytic cleavage at a single site impairs dimerization and abolishes repressor activity.

It localises to the cytoplasm. Transcriptional repressor that constitutively blocks the transcription of the gene for the penicillin-binding protein MecA. Binds DNA as a dimer. The polypeptide is Methicillin resistance regulatory protein MecI (mecI) (Staphylococcus aureus (strain Mu50 / ATCC 700699)).